The sequence spans 214 residues: cAMP-activated global transcriptional regulator Vfr (214 aa).

Residues 59-60 (RE), 73-75 (GEL), 87-88 (RS), 132-133 (TT), arginine 179, and arginine 185 contribute to the 3',5'-cyclic AMP site. The HTH crp-type domain occupies 142 to 214 (LDVTGRVART…GKTMVVFGTR (73 aa)). Positions 174–193 (RQEIGRIVGCSREMVGRVLK) form a DNA-binding region, H-T-H motif.

As to quaternary structure, homodimer.

Its function is as follows. Global cAMP-dependent transcriptional regulator that controls virulence gene expression by distinct cAMP-dependent and -independent mechanisms, which allow to fine tune its virulence program in response to specific host cues or environments. Controls the expression of many regulatory targets including type II, type III and type IV secretion systems, flagellar-mediated motility, and quorum sensing systems. Transcriptional control is exerted by binding to a well-characterized consensus site (5'-ANWWTGNGAWNYAGWTCACAT) within target promoters. Directly binds to the toxA upstream region to regulate exotoxin A production, to the lasR gene promoter to activate the las quorum-sensing system or to the exsA promoter to regulate type III secretion system. Autoregulates as well its own expression. The sequence is that of cAMP-activated global transcriptional regulator Vfr (vfr) from Pseudomonas aeruginosa (strain ATCC 15692 / DSM 22644 / CIP 104116 / JCM 14847 / LMG 12228 / 1C / PRS 101 / PAO1).